The following is a 926-amino-acid chain: DNA mismatch repair protein MutS (926 aa).

The interval 1 to 60 (MAASQNPIQGSLFGGNEESDLNKAEKLKGSERSNVNLSHQQLKEDASLRPRIKQTPKNPN) is disordered. Residues 20–31 (DLNKAEKLKGSE) show a composition bias toward basic and acidic residues. 726 to 733 (GPNASGKS) contacts ATP.

Belongs to the DNA mismatch repair MutS family.

Functionally, this protein is involved in the repair of mismatches in DNA. It is possible that it carries out the mismatch recognition step. This protein has a weak ATPase activity. This is DNA mismatch repair protein MutS from Prochlorococcus marinus (strain NATL2A).